A 360-amino-acid polypeptide reads, in one-letter code: Phospho-N-acetylmuramoyl-pentapeptide-transferase (360 aa).

10 consecutive transmembrane segments (helical) span residues 21–41 (YLTLRGILGILTALVISFIVG), 70–90 (GTPTMGGALILVTITVSTLLW), 97–117 (YVWAVLLVTLAYGLIGFVDDY), 134–154 (YLWQSVFGLGAALFLYHTASS), 168–188 (VVLNMGWLYVPLVYFVVVGSS), 199–219 (GLAILPTVLVAGGLAIFAYAS), 236–256 (AGELVVFCGALVGAGLGFLWF), 263–283 (VFMGDIGALALGAALGMVAVL), 288–308 (IVLMIMGGIFVMETVSVMLQV), and 338–358 (VIVRFWIISVILVLIGLATLK).

Belongs to the glycosyltransferase 4 family. MraY subfamily. The cofactor is Mg(2+).

Its subcellular location is the cell inner membrane. The catalysed reaction is UDP-N-acetyl-alpha-D-muramoyl-L-alanyl-gamma-D-glutamyl-meso-2,6-diaminopimeloyl-D-alanyl-D-alanine + di-trans,octa-cis-undecaprenyl phosphate = di-trans,octa-cis-undecaprenyl diphospho-N-acetyl-alpha-D-muramoyl-L-alanyl-D-glutamyl-meso-2,6-diaminopimeloyl-D-alanyl-D-alanine + UMP. It participates in cell wall biogenesis; peptidoglycan biosynthesis. In terms of biological role, catalyzes the initial step of the lipid cycle reactions in the biosynthesis of the cell wall peptidoglycan: transfers peptidoglycan precursor phospho-MurNAc-pentapeptide from UDP-MurNAc-pentapeptide onto the lipid carrier undecaprenyl phosphate, yielding undecaprenyl-pyrophosphoryl-MurNAc-pentapeptide, known as lipid I. The protein is Phospho-N-acetylmuramoyl-pentapeptide-transferase of Methylococcus capsulatus (strain ATCC 33009 / NCIMB 11132 / Bath).